A 373-amino-acid polypeptide reads, in one-letter code: Chaperone protein DnaJ (373 aa).

One can recognise a J domain in the interval 5–70; sequence DYYEVLGLQK…EKKSNYDQFG (66 aa). The segment at 132 to 214 adopts a CR-type zinc-finger fold; sequence GVEKEITVNR…CRGNGNVRKT (83 aa). Residues Cys-145, Cys-148, Cys-162, Cys-165, Cys-188, Cys-191, Cys-202, and Cys-205 each coordinate Zn(2+). CXXCXGXG motif repeat units lie at residues 145–152, 162–169, 188–195, and 202–209; these read CEHCNGSG, CPTCSGTG, CDRCSGTG, and CTHCRGNG.

The protein belongs to the DnaJ family. As to quaternary structure, homodimer. Zn(2+) serves as cofactor.

It localises to the cytoplasm. Its function is as follows. Participates actively in the response to hyperosmotic and heat shock by preventing the aggregation of stress-denatured proteins and by disaggregating proteins, also in an autonomous, DnaK-independent fashion. Unfolded proteins bind initially to DnaJ; upon interaction with the DnaJ-bound protein, DnaK hydrolyzes its bound ATP, resulting in the formation of a stable complex. GrpE releases ADP from DnaK; ATP binding to DnaK triggers the release of the substrate protein, thus completing the reaction cycle. Several rounds of ATP-dependent interactions between DnaJ, DnaK and GrpE are required for fully efficient folding. Also involved, together with DnaK and GrpE, in the DNA replication of plasmids through activation of initiation proteins. This Clostridium botulinum (strain Alaska E43 / Type E3) protein is Chaperone protein DnaJ.